The sequence spans 512 residues: GMP synthase [glutamine-hydrolyzing] (512 aa).

Residues 9–198 (GVLVVDFGGQ…WLSLVGAPRT (190 aa)) form the Glutamine amidotransferase type-1 domain. The active-site Nucleophile is the cysteine 87. Residues histidine 173 and glutamate 175 contribute to the active site. A GMPS ATP-PPase domain is found at 199 to 387 (WRPGDMVSEL…LGVPRELIWK (189 aa)). 226–232 (SGGVDST) is a binding site for ATP.

The enzyme catalyses XMP + L-glutamine + ATP + H2O = GMP + L-glutamate + AMP + diphosphate + 2 H(+). The protein operates within purine metabolism; GMP biosynthesis; GMP from XMP (L-Gln route): step 1/1. Catalyzes the synthesis of GMP from XMP. The sequence is that of GMP synthase [glutamine-hydrolyzing] (guaA) from Aeropyrum pernix (strain ATCC 700893 / DSM 11879 / JCM 9820 / NBRC 100138 / K1).